Here is a 289-residue protein sequence, read N- to C-terminus: tRNA pseudouridine synthase B (289 aa).

Catalysis depends on Asp38, which acts as the Nucleophile.

It belongs to the pseudouridine synthase TruB family. Type 1 subfamily.

It carries out the reaction uridine(55) in tRNA = pseudouridine(55) in tRNA. In terms of biological role, responsible for synthesis of pseudouridine from uracil-55 in the psi GC loop of transfer RNAs. In Clostridium kluyveri (strain ATCC 8527 / DSM 555 / NBRC 12016 / NCIMB 10680 / K1), this protein is tRNA pseudouridine synthase B.